A 414-amino-acid polypeptide reads, in one-letter code: Putative F-box/kelch-repeat protein At1g20940 (414 aa).

Positions Ser13 to Pro65 constitute an F-box domain. 2 Kelch repeats span residues Leu281–Gly328 and Leu331–Pro378.

In terms of assembly, interacts with DEK3.

Its pathway is protein modification; protein ubiquitination. Its function is as follows. Probable component of an E3 ubiquitin ligase complex. In Arabidopsis thaliana (Mouse-ear cress), this protein is Putative F-box/kelch-repeat protein At1g20940.